Reading from the N-terminus, the 205-residue chain is tRNA (guanine-N(7)-)-methyltransferase (205 aa).

Residues Glu-36, Glu-61, Asp-88, and Asp-109 each contribute to the S-adenosyl-L-methionine site. Residue Asp-109 is part of the active site. Lys-113 lines the substrate pocket. The tract at residues 115 to 120 (RHEKRR) is interaction with RNA. Substrate-binding positions include Asp-145 and 183-186 (TGYE).

The protein belongs to the class I-like SAM-binding methyltransferase superfamily. TrmB family.

The enzyme catalyses guanosine(46) in tRNA + S-adenosyl-L-methionine = N(7)-methylguanosine(46) in tRNA + S-adenosyl-L-homocysteine. Its pathway is tRNA modification; N(7)-methylguanine-tRNA biosynthesis. In terms of biological role, catalyzes the formation of N(7)-methylguanine at position 46 (m7G46) in tRNA. This chain is tRNA (guanine-N(7)-)-methyltransferase, found in Mycoplasmopsis agalactiae (strain NCTC 10123 / CIP 59.7 / PG2) (Mycoplasma agalactiae).